The chain runs to 1038 residues: GTPase-activating Rap/Ran-GAP domain-like protein 3 (1038 aa).

Lys-6 and Ser-68 each carry phosphoserine. The Rap-GAP domain maps to 214 to 430; it reads LLVLEEQEGS…RTLDMLIRSL (217 aa). A phosphoserine mark is found at Ser-449 and Ser-455. Residues 512-824 enclose the CNH domain; that stretch reads PHEAVCADPW…QLVASRSDIY (313 aa). 2 disordered regions span residues 833-863 and 937-1038; these read EGSSGGSSKGASAHTSPQTPPARDTPLFPSS and LLGL…IDLK. Phosphothreonine is present on Thr-851. The segment covering 1019–1028 has biased composition (polar residues); that stretch reads SGSSPFQLMA.

This sequence belongs to the GARNL3 family.

The polypeptide is GTPase-activating Rap/Ran-GAP domain-like protein 3 (Garnl3) (Mus musculus (Mouse)).